The following is a 970-amino-acid chain: Type III restriction-modification enzyme EcoP15I Res subunit (970 aa).

The tract at residues 75 to 540 (AKSNIIDVSM…EVGRGLRLPV (466 aa)) is helicase-like domain. Positions 91, 122, 126, and 226 each coordinate AMP. An endonuclease domain region spans residues 894 to 918 (TYSPDFAYVVKTAEGDYLNFIIETK).

Belongs to the type III restriction-modification system Res protein family. A heterotetramer with stoichiometry Res(2)Mod(2). A heterotrimer with stoichiometry Res(1)Mod(2). Mg(2+) is required as a cofactor. S-adenosyl-L-methionine serves as cofactor.

It carries out the reaction Endonucleolytic cleavage of DNA to give specific double-stranded fragments with terminal 5'-phosphates.. Functionally, a type III restriction enzyme that recognizes 2 inversely oriented double-stranded sequences 5'-CAGCAG-3' and cleaves DNA 25-27 base pairs downstream of one site. DNA restriction requires both the Res and Mod subunits. DNA topology affects its action; relaxed and negatively supercoiled DNA are digested but positively supercoiled DNA is not a good substrate. Interacts with DNA approximately one half-turn downstream of the recognition site. After binding to one recognition site undergoes random one-dimensional diffusion along DNA until it collides with a stationary enzyme bound to the second DNA site, which is when DNA cleavage occurs. This is Type III restriction-modification enzyme EcoP15I Res subunit from Escherichia coli.